The sequence spans 124 residues: Large ribosomal subunit protein bL12 (124 aa).

This sequence belongs to the bacterial ribosomal protein bL12 family. Homodimer. Part of the ribosomal stalk of the 50S ribosomal subunit. Forms a multimeric L10(L12)X complex, where L10 forms an elongated spine to which 2 to 4 L12 dimers bind in a sequential fashion. Binds GTP-bound translation factors.

Functionally, forms part of the ribosomal stalk which helps the ribosome interact with GTP-bound translation factors. Is thus essential for accurate translation. The chain is Large ribosomal subunit protein bL12 from Akkermansia muciniphila (strain ATCC BAA-835 / DSM 22959 / JCM 33894 / BCRC 81048 / CCUG 64013 / CIP 107961 / Muc).